A 464-amino-acid polypeptide reads, in one-letter code: ATP synthase subunit beta (464 aa).

An ATP-binding site is contributed by 148–155; that stretch reads GGAGVGKT.

Belongs to the ATPase alpha/beta chains family. As to quaternary structure, F-type ATPases have 2 components, CF(1) - the catalytic core - and CF(0) - the membrane proton channel. CF(1) has five subunits: alpha(3), beta(3), gamma(1), delta(1), epsilon(1). CF(0) has three main subunits: a(1), b(2) and c(9-12). The alpha and beta chains form an alternating ring which encloses part of the gamma chain. CF(1) is attached to CF(0) by a central stalk formed by the gamma and epsilon chains, while a peripheral stalk is formed by the delta and b chains.

The protein localises to the cell inner membrane. The enzyme catalyses ATP + H2O + 4 H(+)(in) = ADP + phosphate + 5 H(+)(out). Functionally, produces ATP from ADP in the presence of a proton gradient across the membrane. The catalytic sites are hosted primarily by the beta subunits. This Acinetobacter baumannii (strain AB0057) protein is ATP synthase subunit beta.